Consider the following 327-residue polypeptide: MAFPGAGPILGAIAVSSCLYFLFDYVPIPRWWDKNAYLIGQMHPDEITGLECPYAYLRQIYGKYHWAPFVHKISPTLQKDDYPKYVMVLEIMDAIHLCLMLVDDISDGSDYRKGKPAAHKIYGPTETANRAYYRVTQILAQTTKEFPNLAPWLMGDLRDILEGQDMSLVWRRDGIGGFPTAAKDRAAAYRKMASLKTGALFRLLGHLVLENDSMDEVFTVIAWYSQLQNDCKNVYSSEYAKLKGLVAEDLHNREMTYPIVLALDAPEGHWVTRALESPSPRNIRNALKVIRSKYVRDKCTAELAESGASVKEWLQLWGRTEKLDLKA.

Residues 3 to 23 traverse the membrane as a helical segment; the sequence is FPGAGPILGAIAVSSCLYFLF. Isopentenyl diphosphate-binding residues include Lys-63 and His-96. Positions 103 and 107 each coordinate Mg(2+). 2 residues coordinate dimethylallyl diphosphate: Arg-112 and Lys-196. N-linked (GlcNAc...) asparagine glycosylation occurs at Asn-211.

The protein belongs to the FPP/GGPP synthase family.

It localises to the membrane. The protein operates within secondary metabolite biosynthesis. In terms of biological role, prenyl transferase; part of the gene cluster that mediates the biosynthesis of the indole diterpenes janthitremanes such as shearinine K or shearinine A. The geranylgeranyl diphosphate (GGPP) synthase janG catalyzes the first step in janthitremane biosynthesis via conversion of farnesyl pyrophosphate and isopentyl pyrophosphate into geranylgeranyl pyrophosphate (GGPP). Condensation of indole-3-glycerol phosphate with GGPP by the prenyl transferase janC then forms 3-geranylgeranylindole (3-GGI). Epoxidation by the FAD-dependent monooxygenase janM leads to a epoxidized-GGI that is substrate of the terpene cyclase janB for cyclization to yield paspaline. Paspaline is subsequently converted to 13-desoxypaspaline by the cytochrome P450 monooxygenase janP, via beta-PC-M6 in a series of alpha-face oxidations. The cytochrome P450 monooxygenase janQ is proposed to carry out sequential beta-face oxidation steps at C-7 and C-13 of 13-desoxypaspaline to form paspalicine and paspalinine respectively. The indole diterpene prenyltransferase janD may then convert paspalinine into shearinine K which is substrate of janO and/or additional enzymes for oxidation and cyclization to generate shearinine A. The sequence is that of Prenyl transferase janC from Penicillium janthinellum (Penicillium vitale).